A 185-amino-acid polypeptide reads, in one-letter code: Large ribosomal subunit protein uL5 (185 aa).

This sequence belongs to the universal ribosomal protein uL5 family. As to quaternary structure, part of the 50S ribosomal subunit; part of the 5S rRNA/L5/L18/L25 subcomplex. Contacts the 5S rRNA and the P site tRNA. Forms a bridge to the 30S subunit in the 70S ribosome.

Its function is as follows. This is one of the proteins that bind and probably mediate the attachment of the 5S RNA into the large ribosomal subunit, where it forms part of the central protuberance. In the 70S ribosome it contacts protein S13 of the 30S subunit (bridge B1b), connecting the 2 subunits; this bridge is implicated in subunit movement. Contacts the P site tRNA; the 5S rRNA and some of its associated proteins might help stabilize positioning of ribosome-bound tRNAs. This is Large ribosomal subunit protein uL5 from Rhizobium etli (strain CIAT 652).